The following is a 1071-amino-acid chain: MLRDGNEGMFTIPGFSQIQFEGFFRFIDQGLTEELHKFPKIEDTDQEIEFQLFVDTYRLVEPLIKERDAVYESLTYSSELYVPAGLIWKTGRDMQEQTIFIGNIPLMNSLGTSIVNGIYRIVINQILQSPGIYYRSELDHNGISVYTGSIISDWGGRSELEIDRKARIWARVSRKQKISILVPSSAMGSNLREILDNVCYPEIFLSFPNEKEKKKIGSRENAILEFYQQFACVGGDPVFSESLCKELQKKFFQQRCELGRIGRRNMNWRLNLDIPQNNLFLLPRDVLAAADHLIGMKFGMGTLDDMNHLKNKRIRSVADLLQDQFGLALVRLENVVRGTICGAIRHKLIPTPHNLVTSTPLTTTYESFFGLHPLSQVLDRTNPLTQIVHGRKSSYLGPGGLTGRTASFRIRDIHPSHYGRICPIDTSEGINVGLIGSLAIHARIGYLGSIESPFYEISQRSKEVQTVYLSPNRDEYYMVAAGNSLALNQGIQEEQVVPARYRQEFLTIAWEQIHLRSIFPFQYFSIGASLIPFIEHNDANRALMSSNMQRQAVPLSRSEKCIVGTGLERQAALDSGVSAIAEQDGKIIYTDTDKIVLSGNGDTAISIPLVIYQRSNKNTCMHQKPQVPRGKCLKKGQILADGAATVGGELALGKNVLVSYMPWEGYNFEDAVLISERLVYGDIYTSFHIRKYEIQTHVTSQGPERITNEIPHLEAHLLRNLDINGIVMLGSWIETGDILVGKLTPQTAKESSYAPEDRLLRAILGIQVSTAKETCLKLPIGGRGRVIDVRWIQKGGGSSYNPEMIRVYISQKREIKVGDKVAGRHGNKGIISKILPRQDMPYLQDGTPVDMVFNPLGVPSRMNVGQIFECSLGLAGDLLDRHYRIAPFDERYEQEASRKLVFPELYEASKQTANPWVFEPEYPGKSRIFDGRTGDPFEQPVIIGKSYILKLIHQVDDKIHGRSSGHYALVTQQPLRGRAKQGGQRVGEMEVWALEGFGVAHISQEMLTYKSDHIRARQEVLGTTIIGGTIPNPEDAPESFRLLVRELRSLALELNHFLVSEKNFQIHRKEA.

The protein belongs to the RNA polymerase beta chain family. As to quaternary structure, in plastids the minimal PEP RNA polymerase catalytic core is composed of four subunits: alpha, beta, beta', and beta''. When a (nuclear-encoded) sigma factor is associated with the core the holoenzyme is formed, which can initiate transcription.

The protein localises to the plastid. Its subcellular location is the chloroplast. The enzyme catalyses RNA(n) + a ribonucleoside 5'-triphosphate = RNA(n+1) + diphosphate. DNA-dependent RNA polymerase catalyzes the transcription of DNA into RNA using the four ribonucleoside triphosphates as substrates. The chain is DNA-directed RNA polymerase subunit beta from Drimys granadensis.